A 176-amino-acid chain; its full sequence is Beta-carotene hydroxylase (176 aa).

The Fatty acid hydroxylase domain occupies 10–126; sequence LSVIAMEGIA…AHRLHHAVRG (117 aa). The segment at 152 to 176 is disordered; it reads HGRPPKRDAAKDRPDAASPSSSSPE. Basic and acidic residues predominate over residues 156-166; it reads PKRDAAKDRPD. A compositionally biased stretch (low complexity) spans 167-176; sequence AASPSSSSPE.

This sequence belongs to the sterol desaturase family.

It functions in the pathway carotenoid biosynthesis; zeaxanthin biosynthesis. Functionally, catalyzes the hydroxylation reaction from beta-carotene to zeaxanthin. This Pseudescherichia vulneris (Escherichia vulneris) protein is Beta-carotene hydroxylase (crtZ).